Consider the following 103-residue polypeptide: c-Myc-binding protein (103 aa).

Belongs to the AMY1 family. Binds via its C-terminal region to the N-terminal region of MYC. Associates with AKAP1/S-AKAP84. Interacts with MYCBPAP. Interacts with CFAP91.

The protein resides in the cytoplasm. It localises to the nucleus. Its function is as follows. May control the transcriptional activity of MYC. Stimulates the activation of E box-dependent transcription by MYC. This Mus musculus (Mouse) protein is c-Myc-binding protein (Mycbp).